A 267-amino-acid polypeptide reads, in one-letter code: Undecaprenyl-diphosphatase (267 aa).

A run of 8 helical transmembrane segments spans residues 1–21, 39–59, 83–103, 111–131, 144–164, 189–209, 218–238, and 246–266; these read MSYF…FLPI, QGLA…VIYF, AKLA…GLLM, LRSA…LWWV, TGWK…IPGT, FLMS…KLVT, FLLT…HFFL, and MTPF…FLLM.

This sequence belongs to the UppP family.

The protein localises to the cell inner membrane. It carries out the reaction di-trans,octa-cis-undecaprenyl diphosphate + H2O = di-trans,octa-cis-undecaprenyl phosphate + phosphate + H(+). Functionally, catalyzes the dephosphorylation of undecaprenyl diphosphate (UPP). Confers resistance to bacitracin. This is Undecaprenyl-diphosphatase from Vibrio campbellii (strain ATCC BAA-1116).